The sequence spans 317 residues: Beta-ketoacyl-[acyl-carrier-protein] synthase III (317 aa).

Active-site residues include C112 and H244. Residues 245-249 form an ACP-binding region; sequence QANIR. N274 is an active-site residue.

Belongs to the thiolase-like superfamily. FabH family. Homodimer.

The protein localises to the cytoplasm. It carries out the reaction malonyl-[ACP] + acetyl-CoA + H(+) = 3-oxobutanoyl-[ACP] + CO2 + CoA. Its pathway is lipid metabolism; fatty acid biosynthesis. Catalyzes the condensation reaction of fatty acid synthesis by the addition to an acyl acceptor of two carbons from malonyl-ACP. Catalyzes the first condensation reaction which initiates fatty acid synthesis and may therefore play a role in governing the total rate of fatty acid production. Possesses both acetoacetyl-ACP synthase and acetyl transacylase activities. Its substrate specificity determines the biosynthesis of branched-chain and/or straight-chain of fatty acids. The chain is Beta-ketoacyl-[acyl-carrier-protein] synthase III from Rickettsia massiliae (strain Mtu5).